The sequence spans 58 residues: uncharacterized protein (58 aa).

This is an uncharacterized protein from Yersinia enterocolitica.